Here is a 136-residue protein sequence, read N- to C-terminus: MARTKQTACKSTGRKAPRKQLATKAAHKSAPAMGGVKKPHCYRPGTVALHEIHRYQKSTELLICKLPFQRLVREIAQDFKTDLRFQSSAVMALQEASEAYLVGLFEDTNLCAIHAKRVSIMPKDIQLTRRIRGERA.

Residues methionine 1–lysine 10 show a composition bias toward polar residues. Positions methionine 1 to proline 39 are disordered. Arginine 3 is subject to Asymmetric dimethylarginine; by PRMT6. A Phosphothreonine; by HASPIN modification is found at threonine 4. An Allysine; alternate modification is found at lysine 5. Lysine 5 is subject to N6,N6,N6-trimethyllysine; alternate. Lysine 5 carries the N6,N6-dimethyllysine; alternate modification. Lysine 5 is modified (N6-(2-hydroxyisobutyryl)lysine; alternate). Lysine 5 carries the N6-acetyllysine; alternate modification. N6-methyllysine; alternate is present on lysine 5. The residue at position 6 (glutamine 6) is a 5-glutamyl dopamine; alternate. A 5-glutamyl serotonin; alternate modification is found at glutamine 6. Threonine 7 bears the Phosphothreonine; by PKC mark. Lysine 10 carries the post-translational modification N6-(2-hydroxyisobutyryl)lysine; alternate. Lysine 10 is modified (N6-lactoyllysine; alternate). Residue lysine 10 is modified to N6-methylated lysine. Position 11 is an ADP-ribosylserine; alternate (serine 11). A Phosphoserine; alternate; by AURKB, AURKC, RPS6KA3, RPS6KA4 and RPS6KA5 modification is found at serine 11. The residue at position 12 (threonine 12) is a Phosphothreonine; by PKC. Position 15 is an N6-(2-hydroxyisobutyryl)lysine; alternate (lysine 15). Lysine 15 bears the N6-lactoyllysine; alternate mark. Lysine 15 bears the N6-acetyllysine mark. Lysine 15 is subject to N6-glutaryllysine; alternate. An Asymmetric dimethylarginine modification is found at arginine 18. Residues lysine 19, lysine 24, and lysine 28 each carry the N6-(2-hydroxyisobutyryl)lysine; alternate modification. Lysine 19 bears the N6-acetyllysine; alternate mark. Residues lysine 19, lysine 24, and lysine 28 each carry the N6-lactoyllysine; alternate modification. N6-glutaryllysine; alternate is present on residues lysine 19, lysine 24, and lysine 28. N6-butyryllysine; alternate is present on residues lysine 19 and lysine 24. Lysine 19 is subject to N6-methylated lysine; alternate. Lysine 24 bears the N6-acetyllysine mark. Lysine 28 carries the post-translational modification N6-acetyllysine; alternate. At lysine 28 the chain carries N6-methylated lysine; alternate. ADP-ribosylserine; alternate is present on serine 29. At serine 29 the chain carries Phosphoserine; alternate; by AURKB, AURKC and RPS6KA5. The residue at position 37 (lysine 37) is an N6-(2-hydroxyisobutyryl)lysine; alternate. At lysine 37 the chain carries N6-acetyllysine; alternate. Lysine 37 carries the post-translational modification N6-methylated lysine; alternate. Phosphotyrosine is present on tyrosine 42. Residue lysine 57 is modified to N6-(2-hydroxyisobutyryl)lysine; alternate. Lysine 57 is subject to N6-lactoyllysine; alternate. Lysine 57 is subject to N6-glutaryllysine; alternate. Lysine 57 carries the N6-succinyllysine; alternate modification. Residue serine 58 is modified to Phosphoserine. N6-(2-hydroxyisobutyryl)lysine; alternate is present on residues lysine 65 and lysine 80. Lysine 65 and lysine 80 each carry N6-methylated lysine. Residue lysine 80 is modified to N6-lactoyllysine; alternate. Lysine 80 carries the N6-glutaryllysine; alternate modification. Position 80 is an N6-succinyllysine; alternate (lysine 80). Position 81 is a phosphothreonine (threonine 81). An N6-acetyllysine; alternate mark is found at lysine 116 and lysine 123. N6-glutaryllysine; alternate is present on residues lysine 116 and lysine 123. Lysine 123 carries the post-translational modification N6-(2-hydroxyisobutyryl)lysine; alternate. N6-methylated lysine; alternate is present on lysine 123. Position 123 is an N6-succinyllysine; alternate (lysine 123).

This sequence belongs to the histone H3 family. In terms of assembly, the nucleosome is a histone octamer containing two molecules each of H2A, H2B, H3 and H4 assembled in one H3-H4 heterotetramer and two H2A-H2B heterodimers. The octamer wraps approximately 147 bp of DNA. In terms of processing, acetylation is generally linked to gene activation. Acetylation on Lys-19 (H3K18ac) and Lys-24 (H3K24ac) favors methylation at Arg-18 (H3R17me). Acetylation at Lys-123 (H3K122ac) by EP300/p300 plays a central role in chromatin structure: localizes at the surface of the histone octamer and stimulates transcription, possibly by promoting nucleosome instability. Post-translationally, asymmetric dimethylation at Arg-18 (H3R17me2a) is linked to gene activation. Asymmetric dimethylation at Arg-3 (H3R2me2a) by PRMT6 is linked to gene repression and is mutually exclusive with H3 Lys-5 methylation (H3K4me2 and H3K4me3). H3R2me2a is present at the 3' of genes regardless of their transcription state and is enriched on inactive promoters, while it is absent on active promoters. Methylation at Lys-5 (H3K4me) and Lys-80 (H3K79me) are linked to gene activation. Methylation at Lys-5 (H3K4me) facilitates subsequent acetylation of H3 and H4. Methylation at Lys-80 (H3K79me) is associated with DNA double-strand break (DSB) responses and is a specific target for TP53BP1. Methylation at Lys-10 (H3K9me) and Lys-28 (H3K27me) are linked to gene repression. Methylation at Lys-10 (H3K9me) is a specific target for HP1 proteins (CBX1, CBX3 and CBX5) and prevents subsequent phosphorylation at Ser-11 (H3S10ph) and acetylation of H3 and H4. Methylation at Lys-5 (H3K4me) and Lys-80 (H3K79me) require preliminary monoubiquitination of H2B at 'Lys-120'. In terms of processing, phosphorylated at Thr-4 (H3T3ph) by HASPIN during prophase and dephosphorylated during anaphase. Phosphorylation at Ser-11 (H3S10ph) by AURKB is crucial for chromosome condensation and cell-cycle progression during mitosis and meiosis. In addition phosphorylation at Ser-11 (H3S10ph) by RPS6KA4 and RPS6KA5 is important during interphase because it enables the transcription of genes following external stimulation, like mitogens, stress, growth factors or UV irradiation and result in the activation of genes, such as c-fos and c-jun. Phosphorylation at Ser-11 (H3S10ph), which is linked to gene activation, prevents methylation at Lys-10 (H3K9me) but facilitates acetylation of H3 and H4. Phosphorylation at Ser-11 (H3S10ph) by AURKB mediates the dissociation of HP1 proteins (CBX1, CBX3 and CBX5) from heterochromatin. Phosphorylation at Ser-11 (H3S10ph) is also an essential regulatory mechanism for neoplastic cell transformation. Phosphorylated at Ser-29 (H3S28ph) by MAP3K20 isoform 1, RPS6KA5 or AURKB during mitosis or upon ultraviolet B irradiation. Phosphorylation at Thr-7 (H3T6ph) by PRKCB is a specific tag for epigenetic transcriptional activation that prevents demethylation of Lys-5 (H3K4me) by LSD1/KDM1A. At centromeres, specifically phosphorylated at Thr-12 (H3T11ph) from prophase to early anaphase, by DAPK3 and PKN1. Phosphorylation at Thr-12 (H3T11ph) by PKN1 or isoform M2 of PKM (PKM2) is a specific tag for epigenetic transcriptional activation that promotes demethylation of Lys-10 (H3K9me) by KDM4C/JMJD2C. Phosphorylation at Tyr-42 (H3Y41ph) by JAK2 promotes exclusion of CBX5 (HP1 alpha) from chromatin. Post-translationally, lysine deamination at Lys-5 (H3K4all) to form allysine only takes place on H3K4me3 and results in gene repression. Butyrylation of histones marks active promoters and competes with histone acetylation. It is present during late spermatogenesis. In terms of processing, succinylation at Lys-80 (H3K79succ) by KAT2A takes place with a maximum frequency around the transcription start sites of genes. It gives a specific tag for epigenetic transcription activation. Desuccinylation at Lys-123 (H3K122succ) by SIRT7 in response to DNA damage promotes chromatin condensation and double-strand breaks (DSBs) repair. Post-translationally, serine ADP-ribosylation constitutes the primary form of ADP-ribosylation of proteins in response to DNA damage. Serine ADP-ribosylation at Ser-11 (H3S10ADPr) is mutually exclusive with phosphorylation at Ser-11 (H3S10ph) and impairs acetylation at Lys-10 (H3K9ac).

It localises to the nucleus. The protein localises to the chromosome. Functionally, core component of nucleosome. Nucleosomes wrap and compact DNA into chromatin, limiting DNA accessibility to the cellular machineries which require DNA as a template. Histones thereby play a central role in transcription regulation, DNA repair, DNA replication and chromosomal stability. DNA accessibility is regulated via a complex set of post-translational modifications of histones, also called histone code, and nucleosome remodeling. The sequence is that of Histone H3.3C from Cairina moschata (Muscovy duck).